The chain runs to 589 residues: Arginine--tRNA ligase (589 aa).

The 'HIGH' region motif lies at 131-141 (ANPTGPLHVGH).

This sequence belongs to the class-I aminoacyl-tRNA synthetase family. In terms of assembly, monomer.

It localises to the cytoplasm. The catalysed reaction is tRNA(Arg) + L-arginine + ATP = L-arginyl-tRNA(Arg) + AMP + diphosphate. In Legionella pneumophila subsp. pneumophila (strain Philadelphia 1 / ATCC 33152 / DSM 7513), this protein is Arginine--tRNA ligase.